The chain runs to 186 residues: Probable nicotinate-nucleotide adenylyltransferase (186 aa).

This sequence belongs to the NadD family.

It catalyses the reaction nicotinate beta-D-ribonucleotide + ATP + H(+) = deamido-NAD(+) + diphosphate. The protein operates within cofactor biosynthesis; NAD(+) biosynthesis; deamido-NAD(+) from nicotinate D-ribonucleotide: step 1/1. Its function is as follows. Catalyzes the reversible adenylation of nicotinate mononucleotide (NaMN) to nicotinic acid adenine dinucleotide (NaAD). The protein is Probable nicotinate-nucleotide adenylyltransferase of Tropheryma whipplei (strain TW08/27) (Whipple's bacillus).